A 564-amino-acid polypeptide reads, in one-letter code: Phenylalanine--tRNA ligase beta subunit (564 aa).

The B5 domain occupies 286–362 (YFQNMLEVNV…IGMGLDSFKP (77 aa)). Residues Asp340, Asp346, Glu349, and Glu350 each contribute to the Mg(2+) site.

Belongs to the phenylalanyl-tRNA synthetase beta subunit family. Type 2 subfamily. As to quaternary structure, tetramer of two alpha and two beta subunits. Mg(2+) serves as cofactor.

The protein localises to the cytoplasm. The enzyme catalyses tRNA(Phe) + L-phenylalanine + ATP = L-phenylalanyl-tRNA(Phe) + AMP + diphosphate + H(+). The sequence is that of Phenylalanine--tRNA ligase beta subunit from Borrelia turicatae (strain 91E135).